The primary structure comprises 413 residues: Monacolin J acid methylbutanoyltransferase (413 aa).

Arg-73 is a binding site for monacolin J. Ser-76 functions as the Acyl-ester intermediate in the catalytic mechanism. The monacolin J site is built by Arg-173, Tyr-188, and Tyr-258. A 2-methylbutanoate-binding site is contributed by Gly-366. Positions 388 and 390 each coordinate monacolin J.

Belongs to the class-A beta-lactamase family. Interacts with LovF.

It catalyses the reaction monacolin J carboxylate + (S)-2-methylbutanoyl-[2-methylbutanoate polyketide synthase] = lovastatin carboxylate + holo-[2-methylbutanoate polyketide synthase]. It participates in polyketide biosynthesis; lovastatin biosynthesis. Monacolin J acid methylbutanoyltransferase; part of the gene cluster that mediates the biosynthesis of lovastatin (also known as mevinolin, mevacor or monacolin K), a hypolipidemic inhibitor of (3S)-hydroxymethylglutaryl-coenzyme A (HMG-CoA) reductase (HMGR). The first step in the biosynthesis of lovastatin is the production of dihydromonacolin L acid by the lovastatin nonaketide synthase lovB and the trans-acting enoyl reductase lovC via condensation of one acetyl-CoA unit and 8 malonyl-CoA units. Dihydromonacolin L acid is released from lovB by the thioesterase lovG. Next, dihydromonacolin L acid is oxidized by the dihydromonacolin L monooxygenase lovA twice to form monacolin J acid. The 2-methylbutyrate moiety of lovastatin is synthesized by the lovastatin diketide synthase lovF via condensation of one acetyl-CoA unit and one malonyl-CoA unit. Finally, the covalent attachment of this moiety to monacolin J acid is catalyzed by the transesterase lovD to yield lovastatin. LovD has broad substrate specificity and can also convert monacolin J to simvastatin using alpha-dimethylbutanoyl-S-methyl-3-mercaptopropionate (DMB-S-MMP) as the thioester acyl donor, and can also catalyze the reverse reaction and function as hydrolase in vitro. LovD has much higher activity with LovF-bound 2-methylbutanoate than with free diketide substrates. The polypeptide is Monacolin J acid methylbutanoyltransferase (Aspergillus terreus).